An 89-amino-acid polypeptide reads, in one-letter code: Defensin-like protein 147 (89 aa).

Residues 1 to 24 (MKKIFQLSFTVFIIFISLVLGVVG) form the signal peptide. Intrachain disulfides connect C34–C82, C46–C66, C51–C79, and C55–C81.

This sequence belongs to the DEFL family. As to expression, expressed in flower buds, but not in stems, roots or rosette leaves.

The protein resides in the secreted. In Arabidopsis thaliana (Mouse-ear cress), this protein is Defensin-like protein 147 (LCR1).